The following is a 91-amino-acid chain: Small ribosomal subunit protein uS19 (91 aa).

This sequence belongs to the universal ribosomal protein uS19 family.

Functionally, protein S19 forms a complex with S13 that binds strongly to the 16S ribosomal RNA. This Trichodesmium erythraeum (strain IMS101) protein is Small ribosomal subunit protein uS19.